The chain runs to 253 residues: uncharacterized protein (253 aa).

The N-terminal stretch at 1 to 15 (MNRVILFHFHFFKNA) is a signal peptide.

This is an uncharacterized protein from Archaeoglobus fulgidus (strain ATCC 49558 / DSM 4304 / JCM 9628 / NBRC 100126 / VC-16).